The sequence spans 298 residues: MTVSTPSKPHICRFPPGADPDVINQAFREDGVVILEGFLTPAQVDKVNCEMKPHLAKVRGGNMRYGPMDTSLETTLEPERRRIHNLAGLSETFRQDILNHPLMHELSRRVFSEFGDYWQYAGSVIDCAPGTPDQFLHRDQPAQKLFNVGPDAPEGFINFLTALTDFTKTNGATRFVWGSHRDWIDKSDENHPIVVAEVKAGDSLFFSGKIVHGGSFNGTNDTYRSSVALPIVPCIMTPYEANIHIPRSTVETMTPLAQRMIGWRSACLPDPYAIGTWTLNMNELGEQMGLKSKGYLEN.

Fe cation contacts are provided by His-137, Asp-139, and His-212.

Belongs to the PhyH family. Homodimer. Fe cation serves as cofactor.

The catalysed reaction is fumigatonoid C + 2-oxoglutarate + O2 = novofumigatonin + succinate + CO2 + H2O. It functions in the pathway secondary metabolite biosynthesis; terpenoid biosynthesis. Functionally, fe(II)/2-oxoglutarate-dependent dioxygenase; part of the gene cluster that mediates the biosynthesis of novofumigatonin, a heavily oxygenated meroterpenoid containing a unique orthoester moiety. The first step of the pathway is the synthesis of 3,5-dimethylorsellinic acid (DMOA) by the polyketide synthase nvfA via condensation of one acetyl-CoA starter unit with 3 malonyl-CoA units and 2 methylations. DMOA is then converted to farnesyl-DMOA by the farnesyltransferase nvfB. Epoxydation by FAD-dependent monooxygenase nvfK, followed by a protonation-initiated cyclization catalyzed by the terpene cyclase nvfL leads to the production of asnavolin H. The short chain dehydrogenase nvfC then as a 3-OH dehydrogenase of asnovolin H to yield chemesin D. There are two branches to synthesize asnovolin A from chemesin D. In one branch, chemesin D undergoes Baeyer-Villiger oxidation by nvfH, methylation by nvfJ, and enoyl reduction by the nvfM D enoylreductase that reduces the double bond between C-5'and C-6', to form respectively asnovolin I, asnovolin K, and asnovolin A. In the other branch, the methylation precedes the Baeyer-Villiger oxidation and the enoyl reduction to yield asnovolin A via the asnovolin J intermediate. Asnovolin A is further converted to fumigatonoid A by the Fe(II)/2-oxoglutarate-dependent dioxygenase nvfI that catalyzes an endoperoxidation reaction. The alpha/beta hydrolase nvfD then acts as an epimerase that converts fumigatonoid A to its C-5' epimer, which then undergoes spontaneous or nvfD-catalyzed lactonization. The following step utilizes the ketoreductase nvfG to produce fumigatonoid B. The dioxygenase nvfE further converts fumigatonoid B into fumigatonoid C. Finally the Fe(II)/2-oxoglutarate-dependent dioxygenase nvfF catalyzes two rounds of oxidation to transform fumigatonoid C into the end product, novofumigatonin A. In Aspergillus novofumigatus (strain IBT 16806), this protein is Fe(II)/2-oxoglutarate-dependent dioxygenase nvfF.